Consider the following 506-residue polypeptide: Sodium-coupled neutral amino acid symporter 2 (506 aa).

A disordered region spans residues 1 to 23 (MKKAEMGRFSISPDEDSSSYSSN). The Cytoplasmic segment spans residues 1–76 (MKKAEMGRFS…HPGTTSFGMS (76 aa)). The regulates protein turnover upon amino acid deprivation stretch occupies residues 1–96 (MKKAEMGRFS…SGILGLSYAM (96 aa)). Phosphoserine is present on residues Ser-10, Ser-12, Ser-21, Ser-22, and Ser-55. A helical membrane pass occupies residues 77–96 (VFNLSNAIVGSGILGLSYAM). Asn-82 is a binding site for Na(+). Residues 97-102 (ANTGIA) lie on the Extracellular side of the membrane. The chain crosses the membrane as a helical span at residues 103–123 (LFIILLTFVSIFSLYSVHLLL). The Cytoplasmic segment spans residues 124–158 (KTANEGGSLLYEQLGYKAFGLVGKLAASGSITMQN). A helical transmembrane segment spans residues 159-177 (IGAMSSYLFIVKYELPLVI). The Extracellular portion of the chain corresponds to 178-188 (QALTNIEDKTG). A helical membrane pass occupies residues 189–209 (LWYLNGNYLVLLVSLVVILPL). The Cytoplasmic portion of the chain corresponds to 210 to 217 (SLFRNLGY). A helical membrane pass occupies residues 218-238 (LGYTSGLSLLCMVFFLIVVIC). The Extracellular segment spans residues 239–292 (KKFQVPCPVEAALIINETINTTLTQPTALVPALSHNVTENDSCRPHYFIFNSQT). The cysteines at positions 245 and 281 are disulfide-linked. 2 N-linked (GlcNAc...) asparagine glycosylation sites follow: Asn-258 and Asn-274. Residues 293 to 313 (VYAVPILIFSFVCHPAVLPIY) form a helical membrane-spanning segment. The Cytoplasmic segment spans residues 314 to 329 (EELKDRSRRRMMNVSK). The chain crosses the membrane as a helical span at residues 330–350 (ISFFAMFLMYLLAALFGYLTF). The Extracellular portion of the chain corresponds to 351-371 (YEHVESELLHTYSSILGTDIL). A helical transmembrane segment spans residues 372–392 (LLIVRLAVLMAVTLTVPVVIF). Residue Thr-386 coordinates Na(+). Over 393 to 413 (PIRSSVTHLLCASKDFSWWRH) the chain is Cytoplasmic. The helical transmembrane segment at 414 to 434 (SLITVSILAFTNLLVIFVPTI) threads the bilayer. Topologically, residues 435–436 (RD) are extracellular. A helical membrane pass occupies residues 437-457 (IFGFIGASAASMLIFILPSAF). At 458–472 (YIKLVKKEPMKSVQK) the chain is on the cytoplasmic side. A helical membrane pass occupies residues 473 to 495 (IGALFFLLSGVLVMTGSMALIVL). Over 496-506 (DWVHNAPGGGH) the chain is Extracellular.

The protein belongs to the amino acid/polyamine transporter 2 family. Polyubiquitination by NEDD4L regulates the degradation and the activity of SLC38A2. As to expression, ubiquitously expressed. Expressed in neocortex. Widely expressed in the central nervous system with higher concentrations in caudal regions. Expressed by glutamatergic and GABAergic neurons together with astrocytes and other non-neuronal cells in the cerebral cortex (at protein level).

Its subcellular location is the cell membrane. It carries out the reaction L-alanine(in) + Na(+)(in) = L-alanine(out) + Na(+)(out). It catalyses the reaction glycine(in) + Na(+)(in) = glycine(out) + Na(+)(out). The enzyme catalyses L-serine(in) + Na(+)(in) = L-serine(out) + Na(+)(out). The catalysed reaction is L-proline(in) + Na(+)(in) = L-proline(out) + Na(+)(out). It carries out the reaction L-methionine(in) + Na(+)(in) = L-methionine(out) + Na(+)(out). It catalyses the reaction L-histidine(in) + Na(+)(in) = L-histidine(out) + Na(+)(out). The enzyme catalyses L-asparagine(in) + Na(+)(in) = L-asparagine(out) + Na(+)(out). The catalysed reaction is L-glutamine(in) + Na(+)(in) = L-glutamine(out) + Na(+)(out). It carries out the reaction L-threonine(in) + Na(+)(in) = L-threonine(out) + Na(+)(out). It catalyses the reaction L-leucine(in) + Na(+)(in) = L-leucine(out) + Na(+)(out). The enzyme catalyses L-phenylalanine(in) + Na(+)(in) = L-phenylalanine(out) + Na(+)(out). Inhibited by N-methyl-D-glucamine. Inhibited by choline. Allosteric regulation of sodium ions binding by pH. Functionally, symporter that cotransports neutral amino acids and sodium ions from the extracellular to the intracellular side of the cell membrane. The transport is pH-sensitive, Li(+)-intolerant, electrogenic, driven by the Na(+) electrochemical gradient and cotransports of neutral amino acids and sodium ions with a stoichiometry of 1:1. May function in the transport of amino acids at the blood-brain barrier. May function in the transport of amino acids in the supply of maternal nutrients to the fetus through the placenta. Maintains a key metabolic glutamine/glutamate balance underpinning retrograde signaling by dendritic release of the neurotransmitter glutamate. Transports L-proline in differentiating osteoblasts for the efficient synthesis of proline-enriched proteins and provides proline essential for osteoblast differentiation and bone formation during bone development. This is Sodium-coupled neutral amino acid symporter 2 from Homo sapiens (Human).